Here is a 588-residue protein sequence, read N- to C-terminus: Myc box-dependent-interacting protein 1 (588 aa).

N-acetylalanine is present on alanine 2. An interaction with BIN2 region spans residues 2-122 (AEMGSKGVTA…DYHQKLVDQA (121 aa)). 2 coiled-coil regions span residues 15–42 (ASNV…TKDE) and 193–274 (HLVA…EKQH). The 248-residue stretch at 29–276 (VLQKLGKADE…LVSLEKQHGS (248 aa)) folds into the BAR domain. Residues 279–355 (FTVKAQPSDN…PKHTPSKEMK (77 aa)) form a disordered region. Phosphoserine is present on residues serine 296, serine 298, and serine 304. Threonine 308 carries the phosphothreonine modification. Phosphoserine occurs at positions 324 and 332. The tract at residues 379 to 422 (FEAPGPFSEQASLLDLDFEPLPPVASPVKAPTPSGQSIPWDLWE) is clathrin-binding. Residues 448 to 484 (PSQTAEPGPAQPAEASEVVGGAQEPGETAASEATSSS) form a disordered region. Positions 474–484 (ETAASEATSSS) are enriched in low complexity. Residues 515-588 (GFMFKVQAQH…FPENFTERVQ (74 aa)) form the SH3 domain.

As to quaternary structure, heterodimer with AMPH. Binds SH3GLB1. Interacts (via SH3 domain) with DNM1. Interacts with SYNJ1. Interacts (via SH3 domain) with DNM2. Interacts with CLTC. Interacts with AP2A2. Interacts with AP2B1. Interacts with MYC (via N-terminal transactivation domain); the interaction requires the integrity of the conserved MYC box regions 1 and 2. Interacts with BIN2. Interacts with SNX4. Interacts (via BAR domain) with BACE1. Binds (via BAR domain) F-actin. Phosphorylated by protein kinase C. In terms of tissue distribution, isoform 1 is expressed mainly in the brain. Isoform 2 is widely expressed.

The protein localises to the nucleus. It is found in the cytoplasm. It localises to the endosome. The protein resides in the cell membrane. Its subcellular location is the sarcolemma. The protein localises to the T-tubule. In terms of biological role, is a key player in the control of plasma membrane curvature, and membrane shaping and remodeling. Required in muscle cells for the formation of T-tubules, tubular invaginations of the plasma membrane that function in depolarization-contraction coupling. Required in muscle cells for the formation of T-tubules, tubular invaginations of the plasma membrane that function in depolarization-contraction coupling. Is a negative regulator of endocytosis. Is also involved in the regulation of intracellular vesicles sorting, modulation of BACE1 trafficking and the control of amyloid-beta production. In neuronal circuits, endocytosis regulation may influence the internalization of PHF-tau aggregates. May be involved in the regulation of MYC activity and the control cell proliferation. This chain is Myc box-dependent-interacting protein 1 (Bin1), found in Mus musculus (Mouse).